Here is a 413-residue protein sequence, read N- to C-terminus: Multidrug resistance protein MdtA (413 aa).

The signal sequence occupies residues 1 to 32 (MNAKRIRGLLIFAAVIAIAVLIWRHFTQTSPA). Positions 32–46 (AAPGTSEQHAARTSH) are enriched in polar residues. The disordered stretch occupies residues 32–59 (AAPGTSEQHAARTSHSGNNSSGNGGGRR).

The protein belongs to the membrane fusion protein (MFP) (TC 8.A.1) family. In terms of assembly, part of a tripartite efflux system composed of MdtA, MdtB and MdtC.

It is found in the cell inner membrane. The sequence is that of Multidrug resistance protein MdtA from Pectobacterium carotovorum subsp. carotovorum (strain PC1).